A 209-amino-acid polypeptide reads, in one-letter code: Abscisic acid receptor PYL5 (209 aa).

The segment at 44-196 is START-like; sequence HAPGEHQCSS…NLTSLAEVSE (153 aa). Cys-51 and Cys-177 form a disulfide bridge. Abscisate contacts are provided by residues Lys-80, 109-114, 136-142, and Glu-161; these read ATTSTE and RLRNYSS. The short motif at 105-109 is the Gate loop element; sequence TGLPA. The short motif at 135 to 137 is the Latch loop element; it reads HRL.

The protein belongs to the PYR/PYL/RCAR abscisic acid intracellular receptor family. As to quaternary structure, monomer. Interacts with PP2C30. Binding to PP2C30 is dependent on the presence of abscisic acid (ABA). Interacts with PP2C51. Binding to PP2C51 is dependent on the presence of ABA. Interacts with PP2C50. Binding to PP2C50 is dependent on the presence of ABA. Interacts with PP2C53. In terms of tissue distribution, expressed in leaf sheaths and leaf blades. Expressed at low levels in roots, flowers and seeds.

It localises to the nucleus. The protein localises to the cytoplasm. It is found in the cytosol. Intracellular abscisic acid (ABA) receptor that functions as a positive regulator of ABA signaling pathway. Together with ABI5, PP2C30 and SAPK2, is part of an ABA signaling unit that modulates seed germination and early seedling growth. Acts as a positive regulator of abiotic stress-responsive gene expression. Inhibits the protein phosphatases PP2C06 and PP2C09 when activated by ABA. This Oryza sativa subsp. japonica (Rice) protein is Abscisic acid receptor PYL5.